A 94-amino-acid polypeptide reads, in one-letter code: UPF0235 protein TON_0641 (94 aa).

It belongs to the UPF0235 family.

The protein is UPF0235 protein TON_0641 of Thermococcus onnurineus (strain NA1).